We begin with the raw amino-acid sequence, 205 residues long: MNFPSKLLEDAVLEISKLPGIGKKTALRLVLHLLKKESKESESLANALLNARENIRYCKKCHTISDHELCAICTSNKRDKRVVCIVEDIRDVLAIENTNQYFGVYHVIGGVISPMERIGPDQLNINSLIERVITDTEIKEIILGLSPTMEGDTTAFFITKKLKSYPIKISTIARGIPFGGELEYMDEVTLGRSIATRTLFETKED.

Residues 58–73 (CKKCHTISDHELCAIC) form a C4-type zinc finger. One can recognise a Toprim domain in the interval 81 to 177 (RVVCIVEDIR…KISTIARGIP (97 aa)).

It belongs to the RecR family.

Functionally, may play a role in DNA repair. It seems to be involved in an RecBC-independent recombinational process of DNA repair. It may act with RecF and RecO. This chain is Recombination protein RecR, found in Cytophaga hutchinsonii (strain ATCC 33406 / DSM 1761 / CIP 103989 / NBRC 15051 / NCIMB 9469 / D465).